Here is a 357-residue protein sequence, read N- to C-terminus: MIEQQKRKGPELPLVPVKRQRHELLLGAGSGPGAGQQQATPGALLQAGPPRCSSLQAPIMLLSGHEGEVYCCKFHPNGSTLASAGFDRLILLWNVYGDCDNYATLKGHSGAVMELHYNTDGSMLFSASTDKTVAVWDSETGERVKRLKGHTSFVNSCYPARRGPQLVCTGSDDGTVKLWDIRKKAAIQTFQNTYQVLAVTFNDTSDQIISGGIDNDIKVWDLRQNKLTYTMRGHADSVTGLSLSSEGSYLLSNAMDNTVRVWDVRPFAPKERCVKIFQGNVHNFEKNLLRCSWSPDGSKIAAGSADRFVYVWDTTSRRILYKLPGHAGSINEVAFHPDEPIIISASSDKRLYMGEIQ.

Lys-18 participates in a covalent cross-link: Glycyl lysine isopeptide (Lys-Gly) (interchain with G-Cter in SUMO2). The residue at position 21 (Arg-21) is an Asymmetric dimethylarginine. WD repeat units lie at residues Gly-64 to Ala-103, Gly-107 to Arg-146, Gly-149 to Thr-189, Gln-191 to Thr-230, Gly-233 to Arg-272, Asn-283 to Lys-322, and Gly-325 to Gln-357. Residue Lys-270 forms a Glycyl lysine isopeptide (Lys-Gly) (interchain with G-Cter in SUMO2) linkage.

In terms of assembly, component of the pre-catalytic and catalytic spliceosome complexes. Component of the postcatalytic spliceosome P complex. Part of the U5 snRNP complex. Interacts with PRPF8. Component of the U4/U6-U5 tri-snRNP complex composed of the U4, U6 and U5 snRNAs and at least PRPF3, PRPF4, PRPF6, PRPF8, PRPF31, SNRNP200, TXNL4A, WDR57, SNRNP40, DDX23, CD2BP2, PPIH, SNU13, EFTUD2, SART1 and USP39. Component of the minor spliceosome, which splices U12-type introns.

The protein resides in the nucleus. In terms of biological role, required for pre-mRNA splicing as component of the activated spliceosome. Component of the U5 small nuclear ribonucleoprotein (snRNP) complex and the U4/U6-U5 tri-snRNP complex, building blocks of the spliceosome. As a component of the minor spliceosome, involved in the splicing of U12-type introns in pre-mRNAs. This Homo sapiens (Human) protein is U5 small nuclear ribonucleoprotein 40 kDa protein (SNRNP40).